The chain runs to 224 residues: Peptide deformylase 3 (224 aa).

Residues Cys135 and His177 each contribute to the Fe cation site. Glu178 is an active-site residue. His181 contributes to the Fe cation binding site.

This sequence belongs to the polypeptide deformylase family. Fe(2+) is required as a cofactor.

It carries out the reaction N-terminal N-formyl-L-methionyl-[peptide] + H2O = N-terminal L-methionyl-[peptide] + formate. Functionally, removes the formyl group from the N-terminal Met of newly synthesized proteins. Requires at least a dipeptide for an efficient rate of reaction. N-terminal L-methionine is a prerequisite for activity but the enzyme has broad specificity at other positions. This chain is Peptide deformylase 3, found in Streptomyces avermitilis (strain ATCC 31267 / DSM 46492 / JCM 5070 / NBRC 14893 / NCIMB 12804 / NRRL 8165 / MA-4680).